The chain runs to 370 residues: Anhydro-N-acetylmuramic acid kinase (370 aa).

Position 13 to 20 (13 to 20) interacts with ATP; the sequence is GTSMDGVD.

This sequence belongs to the anhydro-N-acetylmuramic acid kinase family.

It catalyses the reaction 1,6-anhydro-N-acetyl-beta-muramate + ATP + H2O = N-acetyl-D-muramate 6-phosphate + ADP + H(+). It participates in amino-sugar metabolism; 1,6-anhydro-N-acetylmuramate degradation. Its pathway is cell wall biogenesis; peptidoglycan recycling. Functionally, catalyzes the specific phosphorylation of 1,6-anhydro-N-acetylmuramic acid (anhMurNAc) with the simultaneous cleavage of the 1,6-anhydro ring, generating MurNAc-6-P. Is required for the utilization of anhMurNAc either imported from the medium or derived from its own cell wall murein, and thus plays a role in cell wall recycling. In Vibrio vulnificus (strain CMCP6), this protein is Anhydro-N-acetylmuramic acid kinase.